A 475-amino-acid polypeptide reads, in one-letter code: Ribulose bisphosphate carboxylase large chain (475 aa).

Positions 1-2 are excised as a propeptide; sequence MS. Proline 3 is subject to N-acetylproline. The residue at position 14 (lysine 14) is an N6,N6,N6-trimethyllysine. Residues asparagine 123 and threonine 173 each contribute to the substrate site. The active-site Proton acceptor is lysine 175. Residue lysine 177 coordinates substrate. Residues lysine 201, aspartate 203, and glutamate 204 each coordinate Mg(2+). Lysine 201 bears the N6-carboxylysine mark. Catalysis depends on histidine 294, which acts as the Proton acceptor. 3 residues coordinate substrate: arginine 295, histidine 327, and serine 379.

The protein belongs to the RuBisCO large chain family. Type I subfamily. As to quaternary structure, heterohexadecamer of 8 large chains and 8 small chains; disulfide-linked. The disulfide link is formed within the large subunit homodimers. Requires Mg(2+) as cofactor. Post-translationally, the disulfide bond which can form in the large chain dimeric partners within the hexadecamer appears to be associated with oxidative stress and protein turnover.

The protein localises to the plastid. It is found in the chloroplast. It catalyses the reaction 2 (2R)-3-phosphoglycerate + 2 H(+) = D-ribulose 1,5-bisphosphate + CO2 + H2O. The enzyme catalyses D-ribulose 1,5-bisphosphate + O2 = 2-phosphoglycolate + (2R)-3-phosphoglycerate + 2 H(+). RuBisCO catalyzes two reactions: the carboxylation of D-ribulose 1,5-bisphosphate, the primary event in carbon dioxide fixation, as well as the oxidative fragmentation of the pentose substrate in the photorespiration process. Both reactions occur simultaneously and in competition at the same active site. The chain is Ribulose bisphosphate carboxylase large chain from Cedrus deodara (Deodar cedar).